The following is a 182-amino-acid chain: Ribosome-recycling factor (182 aa).

The protein belongs to the RRF family.

It is found in the cytoplasm. Functionally, responsible for the release of ribosomes from messenger RNA at the termination of protein biosynthesis. May increase the efficiency of translation by recycling ribosomes from one round of translation to another. In Prochlorococcus marinus (strain MIT 9515), this protein is Ribosome-recycling factor.